We begin with the raw amino-acid sequence, 178 residues long: Endoribonuclease YbeY (178 aa).

Zn(2+)-binding residues include His-118, His-122, and His-128.

Belongs to the endoribonuclease YbeY family. Requires Zn(2+) as cofactor.

The protein localises to the cytoplasm. Functionally, single strand-specific metallo-endoribonuclease involved in late-stage 70S ribosome quality control and in maturation of the 3' terminus of the 16S rRNA. This chain is Endoribonuclease YbeY, found in Mycolicibacterium gilvum (strain PYR-GCK) (Mycobacterium gilvum (strain PYR-GCK)).